The sequence spans 558 residues: uncharacterized protein (558 aa).

The tract at residues 531-558 is disordered; sequence NEDDGTSASPTAMTFDMPPEHPFYSHYR.

This is an uncharacterized protein from Saccharomyces cerevisiae (strain ATCC 204508 / S288c) (Baker's yeast).